The sequence spans 371 residues: Peptidyl-prolyl cis-trans isomerase CPR6 (371 aa).

The PPIase cyclophilin-type domain maps to 7–174 (FFDISIGGKP…RDVKIDDCGV (168 aa)). 3 TPR repeats span residues 219 to 252 (IETVKNIGTEQFKKQNYSVALEKYVKCDKFLKEY), 270 to 303 (VSIPLNIAICALKLKDYKQVLVASSEVLYAEAAD), and 308 to 341 (AKALYRRGLAYYHVNDTDMALNDLEMATTFQPND).

The protein belongs to the cyclophilin-type PPIase family. PPIase D subfamily. Interacts with RPD3.

It localises to the cytoplasm. The enzyme catalyses [protein]-peptidylproline (omega=180) = [protein]-peptidylproline (omega=0). PPIases accelerate the folding of proteins. It catalyzes the cis-trans isomerization of proline imidic peptide bonds in oligopeptides. In Saccharomyces cerevisiae (strain ATCC 204508 / S288c) (Baker's yeast), this protein is Peptidyl-prolyl cis-trans isomerase CPR6 (CPR6).